The sequence spans 320 residues: Transaldolase (320 aa).

Catalysis depends on Lys126, which acts as the Schiff-base intermediate with substrate.

Belongs to the transaldolase family. Type 1 subfamily. In terms of assembly, homodimer.

Its subcellular location is the cytoplasm. The enzyme catalyses D-sedoheptulose 7-phosphate + D-glyceraldehyde 3-phosphate = D-erythrose 4-phosphate + beta-D-fructose 6-phosphate. It participates in carbohydrate degradation; pentose phosphate pathway; D-glyceraldehyde 3-phosphate and beta-D-fructose 6-phosphate from D-ribose 5-phosphate and D-xylulose 5-phosphate (non-oxidative stage): step 2/3. In terms of biological role, transaldolase is important for the balance of metabolites in the pentose-phosphate pathway. The protein is Transaldolase of Bordetella pertussis (strain Tohama I / ATCC BAA-589 / NCTC 13251).